Reading from the N-terminus, the 46-residue chain is Protein PsbN (46 aa).

Residues 7–27 traverse the membrane as a helical segment; the sequence is ALSVAIGVLAVLLGMTGFGVY.

The protein belongs to the PsbN family.

It localises to the cellular thylakoid membrane. Functionally, may play a role in photosystem I and II biogenesis. The polypeptide is Protein PsbN (Parasynechococcus marenigrum (strain WH8102)).